The chain runs to 275 residues: Leucine-rich repeat-containing protein 3C (275 aa).

A signal peptide spans 1 to 41 (MRMTSSSFVSYCTPGLCQFMAMLPTAGHLLPLLLVIGTGGT). In terms of domain architecture, LRRNT spans 42–79 (VPSPQVPPRGCYVAKEAGERTFRCSQAGLSAVPSGIPN). LRR repeat units lie at residues 80–101 (DTRKLYLDANQLASVPAGAFQH), 104–125 (VLEELDLSHNALAHLSGAAFQG), and 129–150 (TLRHLDLSANQLASVPVEAFVG). Asparagine 156 carries an N-linked (GlcNAc...) asparagine glycan. The LRRCT domain maps to 160 to 212 (NPWHCDCALQEVLRQVRLVPGTGTGIVCGSGARPDLVGQEFLLLAGEEELCGS). Residues 225–245 (LLVTMGGWLTLMVAYLVHYVW) form a helical membrane-spanning segment.

The protein belongs to the LRRC3 family.

The protein localises to the membrane. In Homo sapiens (Human), this protein is Leucine-rich repeat-containing protein 3C (LRRC3C).